The following is a 632-amino-acid chain: Bestrophin homolog 24 (632 aa).

4 consecutive transmembrane segments (helical) span residues 28 to 48 (IWKA…ILSV), 83 to 103 (GFFV…IGFI), 234 to 254 (IMYP…CLLA), and 271 to 291 (LYFP…MKVA). Disordered stretches follow at residues 491-516 (LSNK…EHPF) and 562-632 (ETEV…TKFE). The segment covering 563 to 602 (TEVKRDEKKKKEEELREEGDNGKEEKDNKEDKKEEQDRPS) has biased composition (basic and acidic residues). The segment covering 623-632 (PHLRPPTKFE) has biased composition (basic residues).

This sequence belongs to the anion channel-forming bestrophin (TC 1.A.46) family. Calcium-sensitive chloride channel subfamily. As to quaternary structure, forms oligomers.

It is found in the cell membrane. Forms chloride channels. The chain is Bestrophin homolog 24 (best-24) from Caenorhabditis elegans.